The chain runs to 126 residues: Ejaculatory bulb-specific protein 3 (126 aa).

Positions 1 to 17 (MKMILALVVLGLVLVAA) are cleaved as a signal peptide.

The protein belongs to the insect A10/OS-D protein family. Specifically expressed in the ejaculatory bulb and seminal fluid.

Its subcellular location is the secreted. Functionally, protein component of the posterior mating plug. This Drosophila melanogaster (Fruit fly) protein is Ejaculatory bulb-specific protein 3.